Here is a 364-residue protein sequence, read N- to C-terminus: MRVLVSGGGTGGHIYPALALIREIKKLNPEARFLYIGTENGLESTIVPKAGIPFQSIVISGFKRKISLDNVKTVMRFLKGVQDSKRYIRRFNPDIVIGTGGYVCGPVVYAAAKLGIPTIVHEQNSVPGVTNKFLSRYVDKVAVCFEAAIEHFPESKVVMTGNPRASEVMEQNGMKGKRSVGLSLPKKSVLIFGGSRGARPINDAFVEAIEQFGNKSYEILYVTGEVHYDKVMEAVKQKGNPSNVIIKPFIHNMPEVLTGVDLVVSRAGATTLAELTALGKPSVLIPSPYVTNNHQEKNARSVVDKGAAKMLLEKDLTAETLIRDIDEILLDTQTLQNMKLAAKQLGIPDAANKLYEVMNKLVKK.

UDP-N-acetyl-alpha-D-glucosamine contacts are provided by residues 10-12 (TGG), N124, S195, I250, and Q295.

Belongs to the glycosyltransferase 28 family. MurG subfamily.

The protein resides in the cell membrane. It catalyses the reaction di-trans,octa-cis-undecaprenyl diphospho-N-acetyl-alpha-D-muramoyl-L-alanyl-D-glutamyl-meso-2,6-diaminopimeloyl-D-alanyl-D-alanine + UDP-N-acetyl-alpha-D-glucosamine = di-trans,octa-cis-undecaprenyl diphospho-[N-acetyl-alpha-D-glucosaminyl-(1-&gt;4)]-N-acetyl-alpha-D-muramoyl-L-alanyl-D-glutamyl-meso-2,6-diaminopimeloyl-D-alanyl-D-alanine + UDP + H(+). The protein operates within cell wall biogenesis; peptidoglycan biosynthesis. In terms of biological role, cell wall formation. Catalyzes the transfer of a GlcNAc subunit on undecaprenyl-pyrophosphoryl-MurNAc-pentapeptide (lipid intermediate I) to form undecaprenyl-pyrophosphoryl-MurNAc-(pentapeptide)GlcNAc (lipid intermediate II). In Bacillus cereus (strain ATCC 14579 / DSM 31 / CCUG 7414 / JCM 2152 / NBRC 15305 / NCIMB 9373 / NCTC 2599 / NRRL B-3711), this protein is UDP-N-acetylglucosamine--N-acetylmuramyl-(pentapeptide) pyrophosphoryl-undecaprenol N-acetylglucosamine transferase 1.